Reading from the N-terminus, the 327-residue chain is Glycerol-3-phosphate dehydrogenase [NAD(P)+] (327 aa).

Tryptophan 16, arginine 36, and lysine 108 together coordinate NADPH. Sn-glycerol 3-phosphate is bound by residues lysine 108, glycine 136, and serine 138. Alanine 140 is a binding site for NADPH. Positions 191, 244, 254, 255, and 256 each coordinate sn-glycerol 3-phosphate. Lysine 191 serves as the catalytic Proton acceptor. Residue arginine 255 participates in NADPH binding. 2 residues coordinate NADPH: leucine 274 and glutamate 276.

The protein belongs to the NAD-dependent glycerol-3-phosphate dehydrogenase family.

Its subcellular location is the cytoplasm. It catalyses the reaction sn-glycerol 3-phosphate + NAD(+) = dihydroxyacetone phosphate + NADH + H(+). The enzyme catalyses sn-glycerol 3-phosphate + NADP(+) = dihydroxyacetone phosphate + NADPH + H(+). It functions in the pathway membrane lipid metabolism; glycerophospholipid metabolism. Its function is as follows. Catalyzes the reduction of the glycolytic intermediate dihydroxyacetone phosphate (DHAP) to sn-glycerol 3-phosphate (G3P), the key precursor for phospholipid synthesis. This Bradyrhizobium sp. (strain ORS 278) protein is Glycerol-3-phosphate dehydrogenase [NAD(P)+].